A 90-amino-acid chain; its full sequence is Putative large ribosomal subunit protein uL23c (90 aa).

The segment at 1-46 is coded by first part of gene; it reads MDGIKYAVFTDKSIQLLGKKQYTSNVESRSTRTEIKHWVELWNSYE. The segment at 47 to 90 is coded by second part of gene; it reads MNSHRLPGKGRRMGPIMGHTMHYRRMIITLQSSYSIPPLRKKRT.

This sequence belongs to the universal ribosomal protein uL23 family. As to quaternary structure, part of the 50S ribosomal subunit.

The protein localises to the plastid. Its subcellular location is the chloroplast. Functionally, binds to 23S rRNA. In Spinacia oleracea (Spinach), this protein is Putative large ribosomal subunit protein uL23c (rpl23).